A 423-amino-acid chain; its full sequence is Inactive autotransporter heptosyltransferase BimC (423 aa).

A compositionally biased stretch (polar residues) spans 1–10 (MPKVTFSGSA). The disordered stretch occupies residues 1-49 (MPKVTFSGSAPTLGVHAPPALDPRQPASPPPAASNGTHARGFSPPADMP). 4 residues coordinate Fe(3+): Cys-371, Cys-374, Cys-390, and Cys-402.

This sequence belongs to the glycosyltransferase 9 family. As to quaternary structure, homotrimer or homotetramer. Requires Fe(3+) as cofactor.

The protein localises to the cell inner membrane. It localises to the cytoplasm. Functionally, iron-binding protein which is required for the asymmetric polar distribution of the autotransporter BimA on the bacterial surface prior to its translocation into bacterial periplasm. Lacks heptosyltransferase activity. The polypeptide is Inactive autotransporter heptosyltransferase BimC (Burkholderia thailandensis (strain ATCC 700388 / DSM 13276 / CCUG 48851 / CIP 106301 / E264)).